Reading from the N-terminus, the 381-residue chain is Putative F-box protein At3g17500 (381 aa).

The region spanning 1–45 (MMSNLPLDLVEEILSRVPATSLKRLRSTCKSWNNCYKDQRFTEKH) is the F-box domain.

In Arabidopsis thaliana (Mouse-ear cress), this protein is Putative F-box protein At3g17500.